Here is a 799-residue protein sequence, read N- to C-terminus: High affinity nerve growth factor receptor (799 aa).

Positions 1–33 (MLRGQRLGQLGWHRPAAGLGSLMTSLMLACASA) are cleaved as a signal peptide. The Extracellular segment spans residues 34–420 (ASCREVCCPV…VEKKDETPFG (387 aa)). 2 disulfide bridges follow: cysteine 36/cysteine 41 and cysteine 40/cysteine 50. A glycan (N-linked (GlcNAc...) asparagine) is linked at asparagine 67. 2 LRR repeats span residues 90-113 (LGEL…AFRF) and 116-137 (RLSH…TVQG). 10 N-linked (GlcNAc...) asparagine glycosylation sites follow: asparagine 121, asparagine 190, asparagine 204, asparagine 255, asparagine 264, asparagine 320, asparagine 325, asparagine 341, asparagine 361, and asparagine 404. The LRRCT domain maps to 148–219 (NPLHCSCALF…GDDVFLQCQV (72 aa)). Cysteine 154 and cysteine 193 are oxidised to a cystine. 2 consecutive Ig-like C2-type domains span residues 196 to 285 (PTVK…VSVS) and 205 to 368 (DSVE…LAAN). 2 cysteine pairs are disulfide-bonded: cysteine 217–cysteine 267 and cysteine 302–cysteine 348. The helical transmembrane segment at 421–441 (VSVAVGLAVSAALFLSALLLV) threads the bilayer. The Cytoplasmic portion of the chain corresponds to 442–799 (LNKCGQRSKF…APPSYLDVLG (358 aa)). Positions 472–493 (MTLGGSSLSPTEGKGSGLQGHI) are interaction with SQSTM1. At tyrosine 499 the chain carries Phosphotyrosine; by autocatalysis. The region spanning 513-784 (IILKWELGEG…LSMKDVHARL (272 aa)) is the Protein kinase domain. ATP-binding positions include 519 to 527 (LGEGAFGKV) and lysine 547. Aspartate 653 serves as the catalytic Proton acceptor. A phosphotyrosine; by autocatalysis mark is found at tyrosine 679, tyrosine 683, tyrosine 684, and tyrosine 794.

It belongs to the protein kinase superfamily. Tyr protein kinase family. Insulin receptor subfamily. In terms of assembly, exists in a dynamic equilibrium between monomeric (low affinity) and dimeric (high affinity) structures. Homodimerization is induced by binding of a NGF dimer. Found in a complex, at least composed of KIDINS220, MAGI2, NTRK1 and RAPGEF2; the complex is mainly formed at late endosomes in a nerve growth factor (NGF)-dependent manner. Interacts with RAPGEF2; the interaction is strengthened after NGF stimulation. Interacts with SQSTM1; bridges NTRK1 to NGFR. Forms a ternary complex with NGFR and KIDINS220; this complex is affected by the expression levels of KIDINS220 and an increase in KIDINS220 expression leads to a decreased association of NGFR and NTRK1. Interacts (phosphorylated upon activation by NGF) with SHC1; mediates SHC1 phosphorylation and activation. Interacts (phosphorylated upon activation by NGF) with PLCG1; mediates PLCG1 phosphorylation and activation. Interacts (phosphorylated) with SH2B1 and SH2B2. Interacts with GRB2. Interacts with PIK3R1. Interacts with FRS2. Interacts with SORT1; may regulate NTRK1 anterograde axonal transport. Interacts with SH2D1A; regulates NTRK1. Interacts with NRADD. Interacts with RAB7A. Interacts with PTPRS. Interacts with USP36; USP36 does not deubiquitinate NTRK1. Interacts with GGA3. Interacts with TSPAN1; this interaction promotes NTRK1 stability. Post-translationally, ligand-mediated autophosphorylation. Interaction with SQSTM1 is phosphotyrosine-dependent. Autophosphorylation at Tyr-499 mediates interaction and phosphorylation of SHC1. In terms of processing, N-glycosylated. Ubiquitinated. Undergoes polyubiquitination upon activation; regulated by NGFR. Ubiquitination by NEDD4L leads to degradation. Ubiquitination regulates the internalization of the receptor.

It localises to the cell membrane. The protein localises to the early endosome membrane. Its subcellular location is the late endosome membrane. The protein resides in the recycling endosome membrane. It carries out the reaction L-tyrosyl-[protein] + ATP = O-phospho-L-tyrosyl-[protein] + ADP + H(+). With respect to regulation, the pro-survival signaling effect of NTRK1 in neurons requires its endocytosis into signaling early endosomes and its retrograde axonal transport. This is regulated by different proteins including CFL1, RAC1 and SORT1. NTF3 is unable to induce this signaling probably due to the lability of the NTF3-NTRK1 complex in endosomes. SH2D1A inhibits the autophosphorylation of the receptor, and alters the recruitment and activation of downstream effectors and signaling cascades. Regulated by NGFR. Functionally, receptor tyrosine kinase involved in the development and the maturation of the central and peripheral nervous systems through regulation of proliferation, differentiation and survival of sympathetic and nervous neurons. High affinity receptor for NGF which is its primary ligand, it can also bind and be activated by NTF3/neurotrophin-3. However, NTF3 only supports axonal extension through NTRK1 but has no effect on neuron survival. Upon dimeric NGF ligand-binding, undergoes homodimerization, autophosphorylation and activation. Recruits, phosphorylates and/or activates several downstream effectors including SHC1, FRS2, SH2B1, SH2B2 and PLCG1 that regulate distinct overlapping signaling cascades driving cell survival and differentiation. Through SHC1 and FRS2 activates a GRB2-Ras-MAPK cascade that regulates cell differentiation and survival. Through PLCG1 controls NF-Kappa-B activation and the transcription of genes involved in cell survival. Through SHC1 and SH2B1 controls a Ras-PI3 kinase-AKT1 signaling cascade that is also regulating survival. In absence of ligand and activation, may promote cell death, making the survival of neurons dependent on trophic factors. The sequence is that of High affinity nerve growth factor receptor (Ntrk1) from Mus musculus (Mouse).